Consider the following 416-residue polypeptide: RNA-editing ligase 2, mitochondrial (416 aa).

Residues 1 to 17 constitute a mitochondrion transit peptide; the sequence is MLRRLGVRHFRRTPLLF. ATP is bound by residues 29-31, 56-62, Arg79, Glu126, Phe173, and 269-271; these read TEI, EKVHGAN, and KFK. Lys57 acts as the N6-AMP-lysine intermediate in catalysis.

This sequence belongs to the RNA ligase 2 family. Component of the RNA editing complex, a 1600 kDa complex composed of at least 20 proteins.

The protein resides in the mitochondrion. It carries out the reaction ATP + (ribonucleotide)n-3'-hydroxyl + 5'-phospho-(ribonucleotide)m = (ribonucleotide)n+m + AMP + diphosphate.. RNA editing in kinetoplastid mitochondria inserts and deletes uridylates at multiple sites in pre-mRNAs as directed by guide RNAs. In Trypanosoma brucei brucei (strain 927/4 GUTat10.1), this protein is RNA-editing ligase 2, mitochondrial (REL2).